The chain runs to 429 residues: Keratin, type I cytoskeletal 18 (429 aa).

Residues 2–78 form a head region; sequence SYSRSVYSSS…NVNLIGGGQN (77 aa). The segment at 79 to 114 is coil 1A; it reads EKETMQDLNDRLASYLERVRSLEAANKKLEVQIRQH. The region spanning 79–389 is the IF rod domain; that stretch reads EKETMQDLND…RLLEGDGSFD (311 aa). A linker 1 region spans residues 115–130; it reads TEKKGPSKDWSPYYKT. A coil 1B region spans residues 131–222; it reads IEDLRKQVFD…KNHQDDVTEL (92 aa). Residues 223–246 are linker 12; the sequence is QAQVARSAVTVEVDAPKSQDLGKI. The tract at residues 247-385 is coil 2; it reads MTELRAQYDG…HTYRRLLEGD (139 aa). Residues 386-429 are tail; the sequence is GSFDLQDAVPTVTTQTVKKVITTTQRIVDGKVVSESNDTEVLKS.

It belongs to the intermediate filament family. As to quaternary structure, heterotetramer of two type I and two type II keratins. Keratin-18 associates with keratin-8. Phosphorylated. In terms of processing, proteolytically cleaved by caspases during epithelial cell apoptosis.

Functionally, when phosphorylated, plays a role in filament reorganization. The polypeptide is Keratin, type I cytoskeletal 18 (Xenopus tropicalis (Western clawed frog)).